The sequence spans 190 residues: dCTP deaminase (190 aa).

Residues 111 to 116 (KSTYAR), 135 to 137 (TLE), Gln-156, Tyr-172, and Gln-182 each bind dCTP. The active-site Proton donor/acceptor is Glu-137.

The protein belongs to the dCTP deaminase family. In terms of assembly, homotrimer.

The enzyme catalyses dCTP + H2O + H(+) = dUTP + NH4(+). Its pathway is pyrimidine metabolism; dUMP biosynthesis; dUMP from dCTP (dUTP route): step 1/2. In terms of biological role, catalyzes the deamination of dCTP to dUTP. In Stenotrophomonas maltophilia (strain R551-3), this protein is dCTP deaminase.